A 274-amino-acid polypeptide reads, in one-letter code: Large ribosomal subunit protein uL2 (274 aa).

The segment at 228-254 is disordered; the sequence is VDHPMGGGEGRASGGHPRSRKGLYAKG. Basic residues predominate over residues 244-254; the sequence is PRSRKGLYAKG.

It belongs to the universal ribosomal protein uL2 family. In terms of assembly, part of the 50S ribosomal subunit. Forms a bridge to the 30S subunit in the 70S ribosome.

Its function is as follows. One of the primary rRNA binding proteins. Required for association of the 30S and 50S subunits to form the 70S ribosome, for tRNA binding and peptide bond formation. It has been suggested to have peptidyltransferase activity; this is somewhat controversial. Makes several contacts with the 16S rRNA in the 70S ribosome. This chain is Large ribosomal subunit protein uL2, found in Azobacteroides pseudotrichonymphae genomovar. CFP2.